The primary structure comprises 646 residues: Preterminal protein (646 aa).

Positions 357 to 366 match the Nuclear localization signal motif; the sequence is RLPVRRRRRR. S555 is modified (O-(5'-phospho-DNA)-serine). Residues 619-646 form a disordered region; it reads LHADVPLPPLQANPHPPLPPDARPQRTM. Positions 624–640 are enriched in pro residues; it reads PLPPLQANPHPPLPPDA.

This sequence belongs to the adenoviridae terminal protein family. Heterodimer with the polymerase; this heterodimer binds to bp 9 to 18 of the genome. Interacts with host POU2F1; POU2F1 binds to the auxiliary sequences in the inverted terminal repeats and tethers the pTP-POL heterodimer to the origin DNA thereby participating in the assembly of the pre-initiation complex (POL-TP-DBP-NFIA-POU2F1). Preterminal protein is used to replicate viral genome, upon genomic encapsidation it is processed first into iTP and finally into TP by adenovirus protease.

It is found in the host nucleus matrix. Its function is as follows. Protein covalently bound to the viral DNA that acts as a primer for viral genomic replication by DNA strand displacement. Assembles on the viral origin of replication in an initiation complex with viral polymerase, DBP, host NFIA and host POU2F1/OCT1. During initiation, the polymerase covalently couples the first dCTP with Ser-580 of pTP. The terminal protein stimulates the template activity over 20 fold compared to protein-free templates. Neo-synthesized viral genomes are linked to two preterminal proteins, one for each 5' end. These new genomes are encapsidated in the nucleus, and during capsid maturation by viral protease, preterminal protein is first cleaved into intermediary (iTP), then into mature TP. May play a role in host nuclear matrix localization of genomic DNA. The chain is Preterminal protein from Homo sapiens (Human).